The following is a 622-amino-acid chain: MRLLRRRHMPLRLAMVGCAFVLFLFLLHRDVSSREEATEKPWLKSLVSRKDHVLDLMLEAMNNLRDSMPKLQIRAPEAQQTLFSINQSCLPGFYTPAELKPFWERPPQDPNAPGADGKAFQKSKWTPLETQEKEEGYKKHCFNAFASDRISLQRSLGPDTRPPECVDQKFRRCPPLATTSVIIVFHNEAWSTLLRTVYSVLHTTPAILLKEIILVDDASTEEHLKEKLEQYVKQLQVVRVVRQEERKGLITARLLGASVAQAEVLTFLDAHCECFHGWLEPLLARIAEDKTVVVSPDIVTIDLNTFEFAKPVQRGRVHSRGNFDWSLTFGWETLPPHEKQRRKDETYPIKSPTFAGGLFSISKSYFEHIGTYDNQMEIWGGENVEMSFRVWQCGGQLEIIPCSVVGHVFRTKSPHTFPKGTSVIARNQVRLAEVWMDSYKKIFYRRNLQAAKMAQEKSFGDISERLQLREQLHCHNFSWYLHNVYPEMFVPDLTPTFYGAIKNLGTNQCLDVGENNRGGKPLIMYSCHGLGGNQYFEYTTQRDLRHNIAKQLCLHVSKGALGLGSCHFTGKNSQVPKDEEWELAQDQLIRNSGSGTCLTSQDKKPAMAPCNPSDPHQLWLFV.

Over 1 to 8 (MRLLRRRH) the chain is Cytoplasmic. A helical; Signal-anchor for type II membrane protein membrane pass occupies residues 9-28 (MPLRLAMVGCAFVLFLFLLH). The Lumenal portion of the chain corresponds to 29 to 622 (RDVSSREEAT…SDPHQLWLFV (594 aa)). An N-linked (GlcNAc...) asparagine glycan is attached at Asn86. Disulfide bonds link Cys165–Cys402 and Cys393–Cys474. The segment at 176–285 (LATTSVIIVF…HGWLEPLLAR (110 aa)) is catalytic subdomain A. Mn(2+) contacts are provided by Asp269, His271, and His407. The interval 348 to 410 (PIKSPTFAGG…PCSVVGHVFR (63 aa)) is catalytic subdomain B. N-linked (GlcNAc...) asparagine glycosylation occurs at Asn476. Positions 506–622 (TNQCLDVGEN…SDPHQLWLFV (117 aa)) constitute a Ricin B-type lectin domain. A disulfide bridge connects residues Cys509 and Cys527. Positions 511, 514, 528, and 533 each coordinate UDP-N-acetyl-alpha-D-galactosamine. 2 cysteine pairs are disulfide-bonded: Cys553-Cys566 and Cys597-Cys610.

It belongs to the glycosyltransferase 2 family. GalNAc-T subfamily. Mn(2+) serves as cofactor. As to expression, expressed in placenta and trachea. Weakly expressed in brain and pancreas. Expressed in fibroblast. Weakly or not expressed in lung, liver, muscle, kidney, spleen, thymus, prostate, testis, ovary, intestine, colon, leukocyte, stomach, thyroid, spinal cord, lymph node, trachea, adrenal gland and bone marrow.

The protein resides in the golgi apparatus membrane. It catalyses the reaction L-seryl-[protein] + UDP-N-acetyl-alpha-D-galactosamine = a 3-O-[N-acetyl-alpha-D-galactosaminyl]-L-seryl-[protein] + UDP + H(+). The catalysed reaction is L-threonyl-[protein] + UDP-N-acetyl-alpha-D-galactosamine = a 3-O-[N-acetyl-alpha-D-galactosaminyl]-L-threonyl-[protein] + UDP + H(+). It functions in the pathway protein modification; protein glycosylation. Its function is as follows. Catalyzes the initial reaction in O-linked oligosaccharide biosynthesis, the transfer of an N-acetyl-D-galactosamine residue to a serine or threonine residue on the protein receptor. May participate in synthesis of oncofetal fibronectin. Has activity toward MUC1A, MUC2, EA2 and fibronectin peptides. Glycosylates FGF23. This chain is Polypeptide N-acetylgalactosaminyltransferase 6 (GALNT6), found in Homo sapiens (Human).